The primary structure comprises 120 residues: Chaperonin GroEL (120 aa).

23 to 27 contributes to the ATP binding site; it reads DGTTT.

Belongs to the chaperonin (HSP60) family. In terms of assembly, forms a cylinder of 14 subunits composed of two heptameric rings stacked back-to-back. Interacts with the co-chaperonin GroES.

Its subcellular location is the cytoplasm. It carries out the reaction ATP + H2O + a folded polypeptide = ADP + phosphate + an unfolded polypeptide.. Functionally, together with its co-chaperonin GroES, plays an essential role in assisting protein folding. The GroEL-GroES system forms a nano-cage that allows encapsulation of the non-native substrate proteins and provides a physical environment optimized to promote and accelerate protein folding. This is Chaperonin GroEL from Mycolicibacterium chitae (Mycobacterium chitae).